We begin with the raw amino-acid sequence, 936 residues long: Protein NNF2 (936 aa).

The Lumenal segment spans residues 1-41 (MEEQFTNQKKVSHLQSLMNTKRSEQPTEFAKKHRFKDTLAL). Lys-10 participates in a covalent cross-link: Glycyl lysine isopeptide (Lys-Gly) (interchain with G-Cter in ubiquitin). The helical transmembrane segment at 42-62 (FLVFLSFNHFTSLCLLVSFIV) threads the bilayer. Residues 63 to 120 (ATKCKDFLANCFIILFLSKKPSRHIGEVAHIDISTSKVTNGSSNRKSNSRFFGNSKNS) lie on the Cytoplasmic side of the membrane. A helical transmembrane segment spans residues 121 to 141 (FVIPIPVLICEILFAMLLKIY). At 142 to 245 (GGDYFVKPIK…FKMLGKHSDS (104 aa)) the chain is on the lumenal side. The helical transmembrane segment at 246–266 (MIYYLSFHILFFSFASSLLHP) threads the bilayer. Over 267 to 936 (HRQTAENKPL…NIHSLIGNSY (670 aa)) the chain is Cytoplasmic. Disordered stretches follow at residues 297–351 (RISS…SNIL), 387–437 (GSNS…DFFS), and 512–533 (TSEN…QEKH). Over residues 299 to 308 (SSSSSVSADS) the composition is skewed to low complexity. Polar residues predominate over residues 325–351 (LSSSNQTIHPSQQNNSPVPLSSHSNIL). 2 stretches are compositionally biased toward low complexity: residues 394–405 (TTTTSTTTSPTT) and 414–428 (SLSN…SNGN). Residues 512–529 (TSENSLTPTNSNTSYVSN) are compositionally biased toward polar residues.

It localises to the endoplasmic reticulum membrane. The sequence is that of Protein NNF2 (NNF2) from Saccharomyces cerevisiae (strain ATCC 204508 / S288c) (Baker's yeast).